The following is a 329-amino-acid chain: Lipoyl synthase (329 aa).

Residues 1–23 (MTDLTATPAPAEPAASAYDPTAK) are disordered. [4Fe-4S] cluster is bound by residues cysteine 76, cysteine 81, cysteine 87, cysteine 102, cysteine 106, cysteine 109, and serine 316. The Radical SAM core domain maps to 87–305 (CFGKGTATFM…EEEAYKMGFT (219 aa)).

It belongs to the radical SAM superfamily. Lipoyl synthase family. It depends on [4Fe-4S] cluster as a cofactor.

It is found in the cytoplasm. The enzyme catalyses [[Fe-S] cluster scaffold protein carrying a second [4Fe-4S](2+) cluster] + N(6)-octanoyl-L-lysyl-[protein] + 2 oxidized [2Fe-2S]-[ferredoxin] + 2 S-adenosyl-L-methionine + 4 H(+) = [[Fe-S] cluster scaffold protein] + N(6)-[(R)-dihydrolipoyl]-L-lysyl-[protein] + 4 Fe(3+) + 2 hydrogen sulfide + 2 5'-deoxyadenosine + 2 L-methionine + 2 reduced [2Fe-2S]-[ferredoxin]. The protein operates within protein modification; protein lipoylation via endogenous pathway; protein N(6)-(lipoyl)lysine from octanoyl-[acyl-carrier-protein]: step 2/2. In terms of biological role, catalyzes the radical-mediated insertion of two sulfur atoms into the C-6 and C-8 positions of the octanoyl moiety bound to the lipoyl domains of lipoate-dependent enzymes, thereby converting the octanoylated domains into lipoylated derivatives. The polypeptide is Lipoyl synthase (Burkholderia mallei (strain NCTC 10247)).